Reading from the N-terminus, the 624-residue chain is Serine/threonine-protein kinase ppk35 (624 aa).

The Protein kinase domain maps to 162–465 (FDLLVKLGQG…TIEIQKHPFF (304 aa)). Residues 168 to 176 (LGQGGYGSV) and lysine 191 contribute to the ATP site. Aspartate 285 serves as the catalytic Proton acceptor. Residues 466–548 (KRLHWNGLRK…KYRPNARKPL (83 aa)) form the AGC-kinase C-terminal domain. Positions 545–559 (RKPLVGRHREKRQLR) are enriched in basic residues. The tract at residues 545–617 (RKPLVGRHRE…VHRLLERKGK (73 aa)) is disordered. The segment covering 560–574 (KEKPEKKNNSTKQKD) has biased composition (basic and acidic residues). Basic residues predominate over residues 596–609 (SKTKGHKTKSSRVH).

This sequence belongs to the protein kinase superfamily. Ser/Thr protein kinase family.

The protein resides in the cytoplasm. It localises to the nucleus. The protein localises to the nucleolus. It carries out the reaction L-seryl-[protein] + ATP = O-phospho-L-seryl-[protein] + ADP + H(+). It catalyses the reaction L-threonyl-[protein] + ATP = O-phospho-L-threonyl-[protein] + ADP + H(+). Its function is as follows. Has a role in meiosis. This is Serine/threonine-protein kinase ppk35 (ppk35) from Schizosaccharomyces pombe (strain 972 / ATCC 24843) (Fission yeast).